Consider the following 1293-residue polypeptide: Phosphoribosylformylglycinamidine synthase (1293 aa).

ATP is bound by residues 305–316 and Ala676; that span reads GAATGSGGEIRD. The tract at residues 305 to 327 is disordered; that stretch reads GAATGSGGEIRDEGATGRGSKPK. Mg(2+) contacts are provided by Asp677, Glu716, Asn720, and Asp884. Ser886 lines the ATP pocket. The Glutamine amidotransferase type-1 domain maps to 1040-1293; it reads MAILREQGVN…MFRNARVNLG (254 aa). The active-site Nucleophile is Cys1133. Active-site residues include His1258 and Glu1260.

In the N-terminal section; belongs to the FGAMS family. Monomer.

Its subcellular location is the cytoplasm. The catalysed reaction is N(2)-formyl-N(1)-(5-phospho-beta-D-ribosyl)glycinamide + L-glutamine + ATP + H2O = 2-formamido-N(1)-(5-O-phospho-beta-D-ribosyl)acetamidine + L-glutamate + ADP + phosphate + H(+). It participates in purine metabolism; IMP biosynthesis via de novo pathway; 5-amino-1-(5-phospho-D-ribosyl)imidazole from N(2)-formyl-N(1)-(5-phospho-D-ribosyl)glycinamide: step 1/2. Functionally, phosphoribosylformylglycinamidine synthase involved in the purines biosynthetic pathway. Catalyzes the ATP-dependent conversion of formylglycinamide ribonucleotide (FGAR) and glutamine to yield formylglycinamidine ribonucleotide (FGAM) and glutamate. This Shewanella oneidensis (strain ATCC 700550 / JCM 31522 / CIP 106686 / LMG 19005 / NCIMB 14063 / MR-1) protein is Phosphoribosylformylglycinamidine synthase.